The primary structure comprises 942 residues: Leucine--tRNA ligase 1 (942 aa).

Positions 39 to 49 (PYTNSPLHIGH) match the 'HIGH' region motif. The short motif at 624 to 628 (KMSKS) is the 'KMSKS' region element. Lys-627 is an ATP binding site.

Belongs to the class-I aminoacyl-tRNA synthetase family.

It localises to the cytoplasm. The catalysed reaction is tRNA(Leu) + L-leucine + ATP = L-leucyl-tRNA(Leu) + AMP + diphosphate. This chain is Leucine--tRNA ligase 1, found in Sulfolobus acidocaldarius (strain ATCC 33909 / DSM 639 / JCM 8929 / NBRC 15157 / NCIMB 11770).